The following is a 453-amino-acid chain: Magnesium transporter MgtE (453 aa).

The Cytoplasmic portion of the chain corresponds to 1–286 (MNEGQEMEEQ…ENPLKAASKR (286 aa)). Residues Glu-71, Asp-98, Asp-102, Glu-136, Ala-140, Tyr-176, Arg-227, Asp-230, Ala-233, Asp-251, and Glu-259 each coordinate Mg(2+). 2 CBS domains span residues 142 to 205 (MTTE…IADI) and 206 to 262 (LNER…EAAS). Residues 287–307 (LPWLITLLFLGMSTASLISNY) form a helical membrane-spanning segment. Glu-308 is a topological domain (extracellular). A helical membrane pass occupies residues 309–329 (SLVSEASILAVFISLITGTAG). The Cytoplasmic portion of the chain corresponds to 330 to 360 (NAGTQSLAVAVRRLAMKDEKDSNFGRLILSE). A helical membrane pass occupies residues 361-381 (VLTGLVTGAVTGLTIMIVVGV). Residues 382–389 (WQHNLPLG) lie on the Extracellular side of the membrane. Residues 390-410 (FVIGMAMLCAITVANLAGSLI) traverse the membrane as a helical segment. The Cytoplasmic segment spans residues 411 to 427 (PMLMDKLGFDPAVASGP). The helical transmembrane segment at 428-448 (FITTLSDLTSVLIYFNIASMF) threads the bilayer. Asp-434 provides a ligand contact to Mg(2+). Residues 449–453 (MRYFV) lie on the Extracellular side of the membrane.

This sequence belongs to the SLC41A transporter family. In terms of assembly, homodimer.

Its subcellular location is the cell membrane. It catalyses the reaction Mg(2+)(in) = Mg(2+)(out). Functionally, acts as a magnesium transporter. The protein is Magnesium transporter MgtE of Enterococcus faecalis (strain ATCC 700802 / V583).